A 322-amino-acid chain; its full sequence is Protein CCC1 (322 aa).

Residues Met1 to Arg99 lie on the Cytoplasmic side of the membrane. Residues Gly19 to Glu86 form a disordered region. Residues Leu26 to Ser53 show a composition bias toward low complexity. A phosphoserine mark is found at Ser29, Ser53, Ser68, Ser71, and Ser83. Polar residues predominate over residues Asn60 to Met70. A helical transmembrane segment spans residues Val100–Ala120. Residues Gly121–Lys129 lie on the Vacuolar side of the membrane. Residues Leu130–Gly150 traverse the membrane as a helical segment. At Tyr151–Ala236 the chain is on the cytoplasmic side. Residues Val237–Val257 traverse the membrane as a helical segment. At Ser258 to Asp259 the chain is on the vacuolar side. The helical transmembrane segment at Val260–Tyr280 threads the bilayer. The Cytoplasmic portion of the chain corresponds to Val281–Gly300. The helical transmembrane segment at Val301 to Leu321 threads the bilayer. Residue Gly322 is a topological domain, vacuolar.

This sequence belongs to the CCC1 family.

It localises to the golgi apparatus membrane. It is found in the vacuole membrane. It carries out the reaction Fe(2+)(in) = Fe(2+)(out). Has a role in both calcium and manganese homeostasis. Involved in the transfer of iron and Mn(2+) from the cytosol to the vacuole for storage of these metals. The protein is Protein CCC1 (CCC1) of Saccharomyces cerevisiae (strain ATCC 204508 / S288c) (Baker's yeast).